The sequence spans 323 residues: Acetyl esterase (323 aa).

Residues 91–93 (HGG) carry the Involved in the stabilization of the negatively charged intermediate by the formation of the oxyanion hole motif. Catalysis depends on residues Ser165, Asp262, and His292.

This sequence belongs to the 'GDXG' lipolytic enzyme family. As to quaternary structure, homodimer. Interacts with MalT and MelA.

It is found in the cytoplasm. In terms of biological role, displays esterase activity towards short chain fatty esters (acyl chain length of up to 8 carbons). Able to hydrolyze triacetylglycerol (triacetin) and tributyrylglycerol (tributyrin), but not trioleylglycerol (triolein) or cholesterol oleate. Negatively regulates MalT activity by antagonizing maltotriose binding. Inhibits MelA galactosidase activity. The polypeptide is Acetyl esterase (Salmonella choleraesuis (strain SC-B67)).